The primary structure comprises 577 residues: 5'-AMP-activated protein kinase subunit gamma (577 aa).

Positions 45–226 (QSEGVGGGEL…NNNNSNSNNN (182 aa)) are disordered. Positions 58–88 (NNNTTNNNTPTNTTTTTNTNTTTMNNSNNNN) are enriched in low complexity. 2 stretches are compositionally biased toward polar residues: residues 106–121 (SIEQ…SQDG) and 138–155 (ESQS…NNNM). Over residues 165-226 (STDNKSSTNT…NNNNSNSNNN (62 aa)) the composition is skewed to low complexity. 4 consecutive CBS domains span residues 279–341 (VIPI…KKPK), 364–426 (ERPS…QLPE), 438–499 (IGTF…LSPS), and 517–574 (QRPE…DVKS).

The protein belongs to the 5'-AMP-activated protein kinase gamma subunit family.

Functionally, AMPK may be responsible for the regulation of fatty acid synthesis by phosphorylation of acetyl-CoA carboxylase. The polypeptide is 5'-AMP-activated protein kinase subunit gamma (prkag) (Dictyostelium discoideum (Social amoeba)).